Here is a 1331-residue protein sequence, read N- to C-terminus: DNA replication ATP-dependent helicase/nuclease JHS1 (1331 aa).

A disordered region spans residues 1–98; that stretch reads MPPRKKPKSS…DMDQQLTEAS (98 aa). The Nuclear localization signal motif lies at 2–8; that stretch reads PPRKKPK. Residues 11–31 are compositionally biased toward polar residues; that stretch reads ALKSNKQSSANHSSQPSTFGI. A compositionally biased stretch (low complexity) spans 40–52; sequence QNSQSTSNSHTST. Over residues 57 to 81 the composition is skewed to polar residues; it reads DQQNVNGLASDTAVLTPQNPLGTSN. The segment covering 82–91 has biased composition (basic and acidic residues); sequence EKPDESKDMD. The interval 362–811 is nuclease activity; sequence ECALYLWDEW…CKLRTGDRVI (450 aa). [4Fe-4S] cluster-binding residues include C422, C666, C669, and C675. Residues 812-1331 form a helicase activity region; that stretch reads LRTEVSHLTV…LNLLPGDLKP (520 aa). The UvrD-like helicase ATP-binding domain maps to 924–1271; it reads NNDQRQAILK…VRSREKPRSS (348 aa). 945 to 952 lines the ATP pocket; that stretch reads GMPGTGKT.

It belongs to the DNA2/NAM7 helicase family. [4Fe-4S] cluster serves as cofactor. In terms of tissue distribution, strongly expressed in meristems, including both root and shoot apical meristems (RAM and SAM). Also present in the vasculature and in young floral tissues.

It localises to the nucleus. Its subcellular location is the chromosome. The catalysed reaction is ATP + H2O = ADP + phosphate + H(+). Its function is as follows. Essential protein required during embryogenesis. Key enzyme involved in DNA replication and damage repair, shoot apical meristem (SAM) maintenance, and development. Involved in Okazaki fragments processing. Possesses different enzymatic activities, such as single-stranded DNA (ssDNA)-dependent ATPase, 5'-3' helicase and endonuclease activities. While the ATPase and endonuclease activities are well-defined and play a key role in Okazaki fragments processing and DSB repair, the 5'-3' DNA helicase activity is atypical: it cannot load onto its tracking strand internally and has an absolute free 5'-end requirement. The protein is DNA replication ATP-dependent helicase/nuclease JHS1 of Arabidopsis thaliana (Mouse-ear cress).